We begin with the raw amino-acid sequence, 65 residues long: Large ribosomal subunit protein bL35 (65 aa).

Belongs to the bacterial ribosomal protein bL35 family.

The sequence is that of Large ribosomal subunit protein bL35 from Thermus thermophilus (strain ATCC BAA-163 / DSM 7039 / HB27).